The chain runs to 505 residues: UDP-N-acetylmuramoyl-L-alanyl-D-glutamate--2,6-diaminopimelate ligase (505 aa).

Position 42 (Ser-42) interacts with UDP-N-acetyl-alpha-D-muramoyl-L-alanyl-D-glutamate. An ATP-binding site is contributed by 126–132; sequence GTNGKTT. Residues 168–169, Ser-195, Gln-201, and Arg-203 contribute to the UDP-N-acetyl-alpha-D-muramoyl-L-alanyl-D-glutamate site; that span reads TT. Lys-235 carries the post-translational modification N6-carboxylysine. Residues Arg-399, 423–426, Gly-474, and Glu-478 each bind meso-2,6-diaminopimelate; that span reads DNPR. The short motif at 423–426 is the Meso-diaminopimelate recognition motif element; that stretch reads DNPR.

Belongs to the MurCDEF family. MurE subfamily. It depends on Mg(2+) as a cofactor. Carboxylation is probably crucial for Mg(2+) binding and, consequently, for the gamma-phosphate positioning of ATP.

It is found in the cytoplasm. The catalysed reaction is UDP-N-acetyl-alpha-D-muramoyl-L-alanyl-D-glutamate + meso-2,6-diaminopimelate + ATP = UDP-N-acetyl-alpha-D-muramoyl-L-alanyl-gamma-D-glutamyl-meso-2,6-diaminopimelate + ADP + phosphate + H(+). It participates in cell wall biogenesis; peptidoglycan biosynthesis. Its function is as follows. Catalyzes the addition of meso-diaminopimelic acid to the nucleotide precursor UDP-N-acetylmuramoyl-L-alanyl-D-glutamate (UMAG) in the biosynthesis of bacterial cell-wall peptidoglycan. This is UDP-N-acetylmuramoyl-L-alanyl-D-glutamate--2,6-diaminopimelate ligase from Synechocystis sp. (strain ATCC 27184 / PCC 6803 / Kazusa).